The chain runs to 81 residues: Exodeoxyribonuclease 7 small subunit (81 aa).

Belongs to the XseB family. In terms of assembly, heterooligomer composed of large and small subunits.

It is found in the cytoplasm. The catalysed reaction is Exonucleolytic cleavage in either 5'- to 3'- or 3'- to 5'-direction to yield nucleoside 5'-phosphates.. Its function is as follows. Bidirectionally degrades single-stranded DNA into large acid-insoluble oligonucleotides, which are then degraded further into small acid-soluble oligonucleotides. The chain is Exodeoxyribonuclease 7 small subunit from Pseudomonas syringae pv. syringae (strain B728a).